The chain runs to 415 residues: Levansucrase (415 aa).

Trp45, Asp46, Ala132, Arg202, and Asp203 together coordinate sucrose. Catalysis depends on Asp46, which acts as the Nucleophile. Residue Glu287 is the Proton donor/acceptor of the active site.

This sequence belongs to the glycosyl hydrolase 68 family.

The catalysed reaction is [6)-beta-D-fructofuranosyl-(2-&gt;](n) alpha-D-glucopyranoside + sucrose = [6)-beta-D-fructofuranosyl-(2-&gt;](n+1) alpha-D-glucopyranoside + D-glucose. Functionally, catalyzes the synthesis of levan, a fructose polymer, by transferring the fructosyl moiety from sucrose to a growing acceptor molecule. The protein is Levansucrase of Rahnella aquatilis (strain ATCC 33071 / DSM 4594 / JCM 1683 / NBRC 105701 / NCIMB 13365 / CIP 78.65).